The following is a 155-amino-acid chain: Small ribosomal subunit protein uS7c (155 aa).

The protein belongs to the universal ribosomal protein uS7 family. Part of the 30S ribosomal subunit.

It is found in the plastid. It localises to the chloroplast. Its function is as follows. One of the primary rRNA binding proteins, it binds directly to 16S rRNA where it nucleates assembly of the head domain of the 30S subunit. In Metasequoia glyptostroboides (Dawn redwood), this protein is Small ribosomal subunit protein uS7c (rps7).